The sequence spans 343 residues: MSQDLDQIVADAQAAFAAANDNATLENEKARFLGKTGALTELLKGLGKLDPETRKTEGARINQIKQQVEAALQARRQALADALMNARLAAEAIDVTLPGRAVSRGSLHPVMRTWERVEQIFGSIGFDVADGPEIETDWMNFTALNNPDNHPARSMQDTFYVDGRDSEDKLLLLRTHTSPMQVRYAKMHVEKYAGKAMPPIKVICPGRTYRVDSDATHSPMFNQVEGLWIGEDVSFADLKGVYTDFLRKFFERDDIQVRFRPSYFPFTEPSAEIDMAFGNGKWLEISGSGQVHPNVLRNMGLDPERYIGFAFGSGLERLTMLRYGINDLRLFFEGDVRFLRQFA.

Residue E268 participates in Mg(2+) binding.

It belongs to the class-II aminoacyl-tRNA synthetase family. Phe-tRNA synthetase alpha subunit type 1 subfamily. As to quaternary structure, tetramer of two alpha and two beta subunits. Mg(2+) serves as cofactor.

The protein resides in the cytoplasm. The enzyme catalyses tRNA(Phe) + L-phenylalanine + ATP = L-phenylalanyl-tRNA(Phe) + AMP + diphosphate + H(+). This chain is Phenylalanine--tRNA ligase alpha subunit, found in Cupriavidus necator (strain ATCC 17699 / DSM 428 / KCTC 22496 / NCIMB 10442 / H16 / Stanier 337) (Ralstonia eutropha).